Reading from the N-terminus, the 721-residue chain is Ophiobolin F synthase oblA (721 aa).

The (7Z)-ophiobola-7,19-dien-3-ol synthase stretch occupies residues Y5–E325. Residues D97 and D101 each contribute to the Mg(2+) site. D97 is a substrate binding site. A DDXXD 1 motif is present at residues D97 to D101. Residues R185–D188, N229, S233–E237, and R316–Y317 contribute to the substrate site. The NSE/DTE signature appears at N229–E237. The geranylfarnesyl diphosphate synthase stretch occupies residues L326 to V721. Positions S348 to P387 are disordered. A compositionally biased stretch (low complexity) spans V372–V384. K432, R435, and H464 together coordinate isopentenyl diphosphate. D471 and D475 together coordinate Mg(2+). The DDXXD 2 motif lies at D471 to D475. Residue R480 coordinates dimethylallyl diphosphate. R481 lines the isopentenyl diphosphate pocket. Dimethylallyl diphosphate-binding residues include K558, T559, Q597, N604, K614, and K624.

It in the N-terminal section; belongs to the terpene synthase family. In the C-terminal section; belongs to the FPP/GGPP synthase family. The cofactor is Mg(2+).

The enzyme catalyses isopentenyl diphosphate + (2E,6E)-farnesyl diphosphate = (2E,6E,10E)-geranylgeranyl diphosphate + diphosphate. The catalysed reaction is isopentenyl diphosphate + (2E,6E,10E)-geranylgeranyl diphosphate = (2E,6E,10E,14E)-geranylfarnesyl diphosphate + diphosphate. It catalyses the reaction (2E,6E,10E,14E)-geranylfarnesyl diphosphate + H2O = ophiobolin F + diphosphate. It participates in secondary metabolite biosynthesis; terpenoid biosynthesis. Bifunctional sesterterpene synthase; part of the gene cluster that mediates the biosynthesis of the sesterterpenes ophiobolins, fungal phytotoxins with potential anti-cancer activities. The first step of the pathway is performed by the sesterterpene synthase oblA that possesses both prenyl transferase and terpene cyclase activity, converting isopentenyl diphosphate and dimethylallyl diphosphate into geranylfarnesyl diphosphate (GFPP) and further converting GFPP into ophiobolin F, respectively. Other sesterterpenoids (C(25) terpenoids) are found as minor products of oblA. The cytochrome P450 monooxygenase oblB then catalyzes a four-step oxidative transformation of ophiobolin F to yield ophiobolin C. The FAD-dependent oxidoreductase oblC might be involved in a later oxidation step that produces ophiobolin A. This chain is Ophiobolin F synthase oblA, found in Cochliobolus heterostrophus (strain C5 / ATCC 48332 / race O) (Southern corn leaf blight fungus).